The chain runs to 724 residues: Probable metal-nicotianamine transporter YSL13 (724 aa).

A disordered region spans residues 1–54 (MATVPTPSEAHGGATPTAADVEMVEASELRRRGKPSGDRATGPSRDGAAAAAEE). 14 consecutive transmembrane segments (helical) span residues 80 to 100 (AFVV…KLNL), 103 to 123 (GIIP…VRLW), 148 to 168 (CVVA…ILSM), 190 to 210 (LGWI…GLVP), 252 to 272 (LGIF…YTAT), 310 to 330 (IVNV…WPLI), 355 to 375 (VFIA…KMII), 423 to 443 (IPWY…IGTV), 455 to 475 (ILVA…GTGL), 487 to 507 (LAIF…LAGL), 541 to 561 (FVSQ…VFWL), 603 to 623 (LNLC…RDLV), 640 to 660 (FYIG…LFVW), and 675 to 695 (VASG…VLAL).

This sequence belongs to the YSL (TC 2.A.67.2) family. As to expression, expressed in leaves and at low levels in root cortex.

It localises to the membrane. In terms of biological role, may be involved in the transport of nicotianamine-chelated metals. This is Probable metal-nicotianamine transporter YSL13 (YSL13) from Oryza sativa subsp. japonica (Rice).